A 481-amino-acid polypeptide reads, in one-letter code: Proton-coupled amino acid transporter 2 (481 aa).

Residues 1–56 (MSVTKSAGSPQVAATVKLDLVSFPESAKKVQSQDPNPVNGSSSESSEKTKGITGFQ) lie on the Cytoplasmic side of the membrane. Residues 26–49 (SAKKVQSQDPNPVNGSSSESSEKT) form a disordered region. The segment covering 29–40 (KVQSQDPNPVNG) has biased composition (polar residues). The helical transmembrane segment at 57 to 77 (TLVHLVKGNMGTGILGLPLAV) threads the bilayer. The Extracellular segment spans residues 78-79 (KN). A helical membrane pass occupies residues 80–100 (AGILMGPLSLLVMGLIACHCM). The Cytoplasmic portion of the chain corresponds to 101–146 (HILVRCAQRFCHRLNKPFMDYGDTVMHGLASSPNTWLQSHAHWGRH). Residues 147-167 (AVSFFLIVTQLGFCCVYIVFL) form a helical membrane-spanning segment. At 168–195 (ADNLKQVVEAVNSTTISCHKNETVVLTP) the chain is on the extracellular side. A helical transmembrane segment spans residues 196–216 (TIDSRLYMLAFLPVLGLLVFI). The Cytoplasmic portion of the chain corresponds to 217-220 (RNLR). The chain crosses the membrane as a helical span at residues 221–241 (VLTIFSLLANVSMLVSLVIIG). At 242–262 (QYIIQGIPDPSQLPLVASWKT) the chain is on the extracellular side. The chain crosses the membrane as a helical span at residues 263–283 (YPLFFGTAIFSFESIGVVLPL). The Cytoplasmic segment spans residues 284–295 (ENKMKDARRFPT). The helical transmembrane segment at 296–316 (ILSLGMSIITTLYIAIGALGY) threads the bilayer. Topologically, residues 317–343 (LRFGDDIKASITLNLPNCWLYQSVKLL) are extracellular. The helical transmembrane segment at 344–364 (YVVGILCTHALQFYVPAEIII) threads the bilayer. The Cytoplasmic segment spans residues 365 to 377 (PLAVSQVSKRWAL). A helical transmembrane segment spans residues 378-398 (PVDLSIRLALVCVTCMLAILI). The Extracellular portion of the chain corresponds to 399 to 402 (PRLD). The chain crosses the membrane as a helical span at residues 403–423 (LVLSLVGSVSSSALALIIPPL). Topologically, residues 424–444 (LEVTTYYGEGMSPLTITKDAL) are cytoplasmic. Residues 445 to 465 (ISILGFMGFVVGTYQALDELI) traverse the membrane as a helical segment. The Extracellular segment spans residues 466-481 (RSGNSLPLSNSTMFIQ).

Belongs to the amino acid/polyamine transporter 2 family. As to expression, expressed in lung and spleen, and to a lower extent in brain, heart, kidney and skeletal muscle.

It is found in the cell membrane. Its subcellular location is the endoplasmic reticulum membrane. The protein resides in the recycling endosome membrane. The enzyme catalyses glycine(in) + H(+)(in) = glycine(out) + H(+)(out). It catalyses the reaction L-alanine(in) + H(+)(in) = L-alanine(out) + H(+)(out). The catalysed reaction is D-alanine(in) + H(+)(in) = D-alanine(out) + H(+)(out). It carries out the reaction L-proline(out) + H(+)(out) = L-proline(in) + H(+)(in). The enzyme catalyses D-proline(out) + H(+)(out) = D-proline(in) + H(+)(in). It catalyses the reaction 4-hydroxy-L-proline(in) + H(+)(in) = 4-hydroxy-L-proline(out) + H(+)(out). The catalysed reaction is L-serine(in) + H(+)(in) = L-serine(out) + H(+)(out). It carries out the reaction D-serine(out) + H(+)(out) = D-serine(in) + H(+)(in). The enzyme catalyses beta-alanine(in) + H(+)(in) = beta-alanine(out) + H(+)(out). It catalyses the reaction 4-aminobutanoate(in) + H(+)(in) = 4-aminobutanoate(out) + H(+)(out). The catalysed reaction is sarcosine(in) + H(+)(in) = sarcosine(out) + H(+)(out). It carries out the reaction N,N-dimethylglycine(in) + H(+)(in) = N,N-dimethylglycine(out) + H(+)(out). Its activity is regulated as follows. Inhibited by L- and D-pipecolic acid, nipecotic acid, isonipecotic acid, L- and D-cycloserine, and L-2-azetidine-carboxylate. Its function is as follows. Electrogenic proton/amino acid symporter with a high selectivity for the small side chains amino acids glycine, alanine and proline, where both L- and D-enantiomers are transported. Extension of the backbone length, as in beta-alanine and 4-aminobutanoate or methylation of the amino group, as in sarcosine and N,N-dimethylglycine, are also tolerated but decrease transport efficiency. A free carboxyl group is preferred. The chain is Proton-coupled amino acid transporter 2 from Rattus norvegicus (Rat).